The sequence spans 192 residues: Molybdenum cofactor guanylyltransferase (192 aa).

GTP contacts are provided by residues 10-12 (LAG), lysine 23, asparagine 51, aspartate 69, and aspartate 99. Aspartate 99 contacts Mg(2+).

It belongs to the MobA family. As to quaternary structure, monomer. Mg(2+) serves as cofactor.

Its subcellular location is the cytoplasm. It catalyses the reaction Mo-molybdopterin + GTP + H(+) = Mo-molybdopterin guanine dinucleotide + diphosphate. Its function is as follows. Transfers a GMP moiety from GTP to Mo-molybdopterin (Mo-MPT) cofactor (Moco or molybdenum cofactor) to form Mo-molybdopterin guanine dinucleotide (Mo-MGD) cofactor. The protein is Molybdenum cofactor guanylyltransferase of Haemophilus influenzae (strain ATCC 51907 / DSM 11121 / KW20 / Rd).